The chain runs to 96 residues: Protein Vpr (96 aa).

Residues 1-42 (MEQAPEDQGPQREPYNEWTLELLEELKNEAVRHFPRPWLHGL) form a homooligomerization region. At serine 79 the chain carries Phosphoserine; by host.

Belongs to the HIV-1 VPR protein family. In terms of assembly, homooligomer, may form homodimer. Interacts with p6-gag region of the Pr55 Gag precursor protein through a (Leu-X-X)4 motif near the C-terminus of the P6gag protein. Interacts with host UNG. May interact with host RAD23A/HHR23A. Interacts with host VPRBP/DCAF1, leading to hijack the CUL4A-RBX1-DDB1-DCAF1/VPRBP complex, mediating ubiquitination of host proteins such as TERT and ZGPAT and arrest of the cell cycle in G2 phase. Post-translationally, phosphorylated on several residues by host. These phosphorylations regulate VPR activity for the nuclear import of the HIV-1 pre-integration complex.

The protein localises to the virion. It is found in the host nucleus. The protein resides in the host extracellular space. Its function is as follows. During virus replication, may deplete host UNG protein, and incude G2-M cell cycle arrest. Acts by targeting specific host proteins for degradation by the 26S proteasome, through association with the cellular CUL4A-DDB1 E3 ligase complex by direct interaction with host VPRPB/DCAF-1. Cell cycle arrest reportedly occurs within hours of infection and is not blocked by antiviral agents, suggesting that it is initiated by the VPR carried into the virion. Additionally, VPR induces apoptosis in a cell cycle dependent manner suggesting that these two effects are mechanistically linked. Detected in the serum and cerebrospinal fluid of AIDS patient, VPR may also induce cell death to bystander cells. During virus entry, plays a role in the transport of the viral pre-integration (PIC) complex to the host nucleus. This function is crucial for viral infection of non-dividing macrophages. May act directly at the nuclear pore complex, by binding nucleoporins phenylalanine-glycine (FG)-repeat regions. The chain is Protein Vpr from Human immunodeficiency virus type 1 group M subtype G (isolate 92NG083) (HIV-1).